An 83-amino-acid polypeptide reads, in one-letter code: uncharacterized protein (83 aa).

This is an uncharacterized protein from Schizosaccharomyces pombe (strain 972 / ATCC 24843) (Fission yeast).